The chain runs to 179 residues: Caveolin-1 (179 aa).

Serine 2 carries the N-acetylserine modification. Phosphoserine is present on serine 2. Positions 2–95 (SGGKYVDSEG…WKASFTTFTV (94 aa)) are required for homooligomerization. At 2 to 105 (SGGKYVDSEG…TKYWFYRLLS (104 aa)) the chain is on the cytoplasmic side. N6-acetyllysine; alternate is present on lysine 5. Residue lysine 5 forms a Glycyl lysine isopeptide (Lys-Gly) (interchain with G-Cter in ubiquitin); alternate linkage. Tyrosine 6 is modified (phosphotyrosine). The residue at position 9 (serine 9) is a Phosphoserine. A Phosphotyrosine; by ABL1 modification is found at tyrosine 14. A Phosphotyrosine modification is found at tyrosine 25. Glycyl lysine isopeptide (Lys-Gly) (interchain with G-Cter in ubiquitin) cross-links involve residues lysine 26 and lysine 30. The residue at position 37 (serine 37) is a Phosphoserine. Residues lysine 39, lysine 48, and lysine 58 each participate in a glycyl lysine isopeptide (Lys-Gly) (interchain with G-Cter in ubiquitin) cross-link. The interval 83–95 (DGIWKASFTTFTV) is interaction with CAVIN3. Positions 106-126 (ALFGIPMALIWGIYFAILSFL) form an intramembrane region, helical. The Cytoplasmic segment spans residues 127–179 (HIWAVVPCIKSFLIEIQCISRVYSIYVHTFCDPLFEAIGKVFSNIRINMQKEI). Residues 132 to 143 (VPCIKSFLIEIQ) form an interacts with SPRY1, SPRY2, SPRY3 and SPRY4 region. 3 S-palmitoyl cysteine lipidation sites follow: cysteine 134, cysteine 144, and cysteine 157. Residues 150-161 (SIYVHTFCDPLF) are interacts with SPRY1, SPRY2, and SPRY4. An interacts with SPRY1, SPRY2, SPRY3 and SPRY4 region spans residues 168–179 (FSNIRINMQKEI).

Belongs to the caveolin family. In terms of assembly, homooligomer. Interacts with GLIPR2. Interacts with NOSTRIN. Interacts with SNAP25 and STX1A. Interacts (via the N-terminus) with DPP4; the interaction is direct. Interacts with CTNNB1, CDH1 and JUP. Interacts with PACSIN2; this interaction induces membrane tubulation. Interacts with SLC7A9. Interacts with BMX and BTK. Interacts with TGFBR1. Interacts with CAVIN3 (via leucine-zipper domain) in a cholesterol-sensitive manner. Interacts with CAVIN1. Interacts with EHD2 in a cholesterol-dependent manner. Forms a ternary complex with UBXN6 and VCP; mediates CAV1 targeting to lysosomes for degradation. Interacts with ABCG1; this interaction regulates ABCG1-mediated cholesterol efflux. Interacts with NEU3; this interaction enhances NEU3 sialidase activity within caveola. Interacts (via C-terminus) with SPRY1, SPRY2 (via C-terminus), SPRY3, and SPRY4. Interacts with IGFBP5; this interaction allows trafficking of IGFBP5 from the plasma membrane to the nucleus. In terms of processing, phosphorylated at Tyr-14 by ABL1 in response to oxidative stress. Post-translationally, ubiquitinated. Undergo monoubiquitination and multi- and/or polyubiquitination. Monoubiquitination of N-terminal lysines promotes integration in a ternary complex with UBXN6 and VCP which promotes oligomeric CAV1 targeting to lysosomes for degradation. Ubiquitinated by ZNRF1; leading to degradation and modulation of the TLR4-mediated immune response.

The protein localises to the golgi apparatus membrane. Its subcellular location is the cell membrane. The protein resides in the membrane. It is found in the caveola. It localises to the membrane raft. Its function is as follows. May act as a scaffolding protein within caveolar membranes. Forms a stable heterooligomeric complex with CAV2 that targets to lipid rafts and drives caveolae formation. Mediates the recruitment of CAVIN proteins (CAVIN1/2/3/4) to the caveolae. Interacts directly with G-protein alpha subunits and can functionally regulate their activity. Involved in the costimulatory signal essential for T-cell receptor (TCR)-mediated T-cell activation. Its binding to DPP4 induces T-cell proliferation and NF-kappa-B activation in a T-cell receptor/CD3-dependent manner. Recruits CTNNB1 to caveolar membranes and may regulate CTNNB1-mediated signaling through the Wnt pathway. Negatively regulates TGFB1-mediated activation of SMAD2/3 by mediating the internalization of TGFBR1 from membrane rafts leading to its subsequent degradation. Binds 20(S)-hydroxycholesterol (20(S)-OHC). In Eulemur macaco macaco (Black lemur), this protein is Caveolin-1 (CAV1).